Reading from the N-terminus, the 310-residue chain is Homoserine kinase (310 aa).

91–101 (PIGSGLGSSAC) is an ATP binding site.

Belongs to the GHMP kinase family. Homoserine kinase subfamily.

Its subcellular location is the cytoplasm. It catalyses the reaction L-homoserine + ATP = O-phospho-L-homoserine + ADP + H(+). It functions in the pathway amino-acid biosynthesis; L-threonine biosynthesis; L-threonine from L-aspartate: step 4/5. Its function is as follows. Catalyzes the ATP-dependent phosphorylation of L-homoserine to L-homoserine phosphate. The sequence is that of Homoserine kinase from Escherichia coli O139:H28 (strain E24377A / ETEC).